Here is a 438-residue protein sequence, read N- to C-terminus: Gamma-glutamyl phosphate reductase (438 aa).

The protein belongs to the gamma-glutamyl phosphate reductase family.

It is found in the cytoplasm. The enzyme catalyses L-glutamate 5-semialdehyde + phosphate + NADP(+) = L-glutamyl 5-phosphate + NADPH + H(+). Its pathway is amino-acid biosynthesis; L-proline biosynthesis; L-glutamate 5-semialdehyde from L-glutamate: step 2/2. Its function is as follows. Catalyzes the NADPH-dependent reduction of L-glutamate 5-phosphate into L-glutamate 5-semialdehyde and phosphate. The product spontaneously undergoes cyclization to form 1-pyrroline-5-carboxylate. This is Gamma-glutamyl phosphate reductase from Natronomonas pharaonis (strain ATCC 35678 / DSM 2160 / CIP 103997 / JCM 8858 / NBRC 14720 / NCIMB 2260 / Gabara) (Halobacterium pharaonis).